The following is an 89-amino-acid chain: MNIKTGDKVRVIAGKDKGKEGSVTKVFLKTDRVIVEGVNKVKKHQKPTQAEPKGGIIEKEAAIHVSNVMLLDASKKKTIRASKRESNKK.

Belongs to the universal ribosomal protein uL24 family. Part of the 50S ribosomal subunit.

In terms of biological role, one of two assembly initiator proteins, it binds directly to the 5'-end of the 23S rRNA, where it nucleates assembly of the 50S subunit. Functionally, one of the proteins that surrounds the polypeptide exit tunnel on the outside of the subunit. The chain is Large ribosomal subunit protein uL24 from Oenococcus oeni (strain ATCC BAA-331 / PSU-1).